The primary structure comprises 213 residues: Pyridoxine/pyridoxamine 5'-phosphate oxidase (213 aa).

Substrate is bound by residues 8–11 (RREY) and K66. FMN-binding positions include 61 to 66 (RIVLLK), 76 to 77 (YT), R82, K83, and Q105. Residues Y123, R127, and S131 each coordinate substrate. Residues 140-141 (QS) and W185 contribute to the FMN site. Substrate is bound at residue 191-193 (RLH). R195 is a binding site for FMN.

The protein belongs to the pyridoxamine 5'-phosphate oxidase family. As to quaternary structure, homodimer. FMN serves as cofactor.

The catalysed reaction is pyridoxamine 5'-phosphate + O2 + H2O = pyridoxal 5'-phosphate + H2O2 + NH4(+). It carries out the reaction pyridoxine 5'-phosphate + O2 = pyridoxal 5'-phosphate + H2O2. It participates in cofactor metabolism; pyridoxal 5'-phosphate salvage; pyridoxal 5'-phosphate from pyridoxamine 5'-phosphate: step 1/1. The protein operates within cofactor metabolism; pyridoxal 5'-phosphate salvage; pyridoxal 5'-phosphate from pyridoxine 5'-phosphate: step 1/1. Functionally, catalyzes the oxidation of either pyridoxine 5'-phosphate (PNP) or pyridoxamine 5'-phosphate (PMP) into pyridoxal 5'-phosphate (PLP). The chain is Pyridoxine/pyridoxamine 5'-phosphate oxidase from Pseudoalteromonas atlantica (strain T6c / ATCC BAA-1087).